A 258-amino-acid polypeptide reads, in one-letter code: Oxidoreductase fscI (258 aa).

NADP(+)-binding residues include Leu-34, Arg-59, Asp-82, Asn-109, and Lys-141. Catalysis depends on Ser-163, which acts as the Proton donor. Arg-193 serves as a coordination point for NADP(+).

The protein belongs to the short-chain dehydrogenases/reductases (SDR) family.

Its pathway is secondary metabolite biosynthesis. In terms of biological role, oxidoreductase; part of the fragmented gene cluster that mediates the biosynthesis of fusarochromene, a tryptophan-derived metabolite closely related to a group of mycotoxins including fusarochromanone. Within the pathway, fscI catalyzes the formation of the chromene ring from the prenyl moity added by the prenyltransferase fscG. The first step of the pathway is the epimerization of L-tryptophan to D-tryptophan in the presence of the NRPS-like tryptophan epimerase fscC. D-tryptophan is subsequently hydroxylated by the tryptophan 6-hydroxylase fscE to yield 6-hydroxytryptophan. The pyrrole ring undergoes cleavaged by the tryptophan 2,3-dioxygenase fscD and is finally converted to 4-hydroxykyrunenine by the hydrolase fscH. The NRPS-like oxidoreductase fscA reduces the carboxyl group to primary alcohol and the DMATS-type prenyltransferase fscG performs prenylation, followed by the formation of a chromene ring catalyzed by the oxidoreductase fscI, which leads to desacetylfusarochromene. Epoxidation by fscF and rearrangement reactions of chromene double bonds convert compound desacetylfusarochromene to fusarochromanones. Although specific acetyltransferases were not found near the fsc gene cluster, several predicted enzymes containing the N-acetyltransferase superfamily domain are present in the genome of F.equiseti. These predicted enzymes may have the potential to convert desacetylfusarochromene to fusarochromene. The chain is Oxidoreductase fscI from Fusarium equiseti (Fusarium scirpi).